The primary structure comprises 61 residues: Small ribosomal subunit protein uS14 (61 aa).

Residues Cys-24, Cys-27, Cys-40, and Cys-43 each contribute to the Zn(2+) site.

The protein belongs to the universal ribosomal protein uS14 family. Zinc-binding uS14 subfamily. As to quaternary structure, part of the 30S ribosomal subunit. Contacts proteins S3 and S10. It depends on Zn(2+) as a cofactor.

Its function is as follows. Binds 16S rRNA, required for the assembly of 30S particles and may also be responsible for determining the conformation of the 16S rRNA at the A site. The polypeptide is Small ribosomal subunit protein uS14 (Mycoplasma genitalium (strain ATCC 33530 / DSM 19775 / NCTC 10195 / G37) (Mycoplasmoides genitalium)).